We begin with the raw amino-acid sequence, 443 residues long: Thymidine phosphorylase (443 aa).

The protein belongs to the thymidine/pyrimidine-nucleoside phosphorylase family. As to quaternary structure, homodimer.

The enzyme catalyses thymidine + phosphate = 2-deoxy-alpha-D-ribose 1-phosphate + thymine. It participates in pyrimidine metabolism; dTMP biosynthesis via salvage pathway; dTMP from thymine: step 1/2. Its function is as follows. The enzymes which catalyze the reversible phosphorolysis of pyrimidine nucleosides are involved in the degradation of these compounds and in their utilization as carbon and energy sources, or in the rescue of pyrimidine bases for nucleotide synthesis. This chain is Thymidine phosphorylase, found in Shewanella piezotolerans (strain WP3 / JCM 13877).